The sequence spans 211 residues: MIKRTICLVYPLFCLASPTWAEESPWTYRIGMTNVAFDASAKVYLNGQRVPGGSADASDNNALTFDFGYAINDQWNVRAIVGIPPTTKVTGAGTLPGIQLGKITYAPTVLTLNYNLPALGPVRPHIGAGVNYTRIFESRDANLKSFDADHAWSPALHVGADIDVNRGWFVSIDIRKLYLKTDASGYLGPQEAKARVTLDPLLTSIAIGRQF.

Its pathway is aromatic compound metabolism; naphthalene degradation. In terms of biological role, may be involved in the conversion of 2-hydroxy-4-(2'-oxo-3,5-cyclohexadienyl)-buta-2,4-dienoate to cis-O-hydroxybenzylidenepyruvate. DoxH and doxJ encode different enzymes that may have interchangeable functions. In Pseudomonas sp. (strain C18), this protein is Dibenzothiophene metabolism operon protein DoxH (doxH).